A 135-amino-acid chain; its full sequence is Small ribosomal subunit protein uS11 (135 aa).

Positions 1–22 (MPPKSRTAAGAKKVRRKEKKNV) are disordered.

Belongs to the universal ribosomal protein uS11 family. Part of the 30S ribosomal subunit. Interacts with proteins S7 and S18. Binds to IF-3.

Its function is as follows. Located on the platform of the 30S subunit, it bridges several disparate RNA helices of the 16S rRNA. Forms part of the Shine-Dalgarno cleft in the 70S ribosome. The sequence is that of Small ribosomal subunit protein uS11 from Nocardioides sp. (strain ATCC BAA-499 / JS614).